The primary structure comprises 967 residues: RNA polymerase-associated protein RapA (967 aa).

Residues 163–333 enclose the Helicase ATP-binding domain; that stretch reads EVGKRHNPRV…FARLRLLDPN (171 aa). Residue 176–183 participates in ATP binding; it reads DEVGLGKT. The DEAH box motif lies at 279–282; it reads DEAH. The Helicase C-terminal domain maps to 489–660; that stretch reads RVEWLLGFLT…NYLAQPNELG (172 aa).

The protein belongs to the SNF2/RAD54 helicase family. RapA subfamily. As to quaternary structure, interacts with the RNAP. Has a higher affinity for the core RNAP than for the holoenzyme. Its ATPase activity is stimulated by binding to RNAP.

Functionally, transcription regulator that activates transcription by stimulating RNA polymerase (RNAP) recycling in case of stress conditions such as supercoiled DNA or high salt concentrations. Probably acts by releasing the RNAP, when it is trapped or immobilized on tightly supercoiled DNA. Does not activate transcription on linear DNA. Probably not involved in DNA repair. This is RNA polymerase-associated protein RapA from Proteus mirabilis (strain HI4320).